A 221-amino-acid polypeptide reads, in one-letter code: Succinate--CoA ligase [ADP-forming] subunit beta, mitochondrial (221 aa).

In terms of domain architecture, ATP-grasp spans 1–122 (DVVIKAQVLA…DSNSAYRQKI (122 aa)). Residue Lys5 coordinates ATP. N6-acetyllysine is present on residues Lys22 and Lys26. Ser114 is subject to Phosphoserine. A Phosphothreonine modification is found at Thr139. Substrate is bound at residue 171–173 (GIM). Lys196 carries the post-translational modification N6-acetyllysine.

It belongs to the succinate/malate CoA ligase beta subunit family. ATP-specific subunit beta subfamily. In terms of assembly, heterodimer of an alpha and a beta subunit. The beta subunit determines specificity for ATP. Interacts with ALAS2.

It is found in the mitochondrion. The enzyme catalyses succinate + ATP + CoA = succinyl-CoA + ADP + phosphate. Its pathway is carbohydrate metabolism; tricarboxylic acid cycle; succinate from succinyl-CoA (ligase route): step 1/1. In terms of biological role, ATP-specific succinyl-CoA synthetase functions in the citric acid cycle (TCA), coupling the hydrolysis of succinyl-CoA to the synthesis of ATP and thus represents the only step of substrate-level phosphorylation in the TCA. The beta subunit provides nucleotide specificity of the enzyme and binds the substrate succinate, while the binding sites for coenzyme A and phosphate are found in the alpha subunit. This Mesocricetus auratus (Golden hamster) protein is Succinate--CoA ligase [ADP-forming] subunit beta, mitochondrial.